We begin with the raw amino-acid sequence, 948 residues long: Protein translocase subunit SecA (948 aa).

ATP contacts are provided by residues glutamine 91, glycine 109–threonine 113, and aspartate 509.

Belongs to the SecA family. As to quaternary structure, monomer and homodimer. Part of the essential Sec protein translocation apparatus which comprises SecA, SecYEG and auxiliary proteins SecDF. Other proteins may also be involved.

It is found in the cell inner membrane. Its subcellular location is the cellular thylakoid membrane. The protein localises to the cytoplasm. It catalyses the reaction ATP + H2O + cellular proteinSide 1 = ADP + phosphate + cellular proteinSide 2.. In terms of biological role, part of the Sec protein translocase complex. Interacts with the SecYEG preprotein conducting channel. Has a central role in coupling the hydrolysis of ATP to the transfer of proteins into and across the cell membrane, serving as an ATP-driven molecular motor driving the stepwise translocation of polypeptide chains across the membrane. Probably participates in protein translocation into and across both the cytoplasmic and thylakoid membranes in cyanobacterial cells. The protein is Protein translocase subunit SecA of Synechococcus elongatus (strain ATCC 33912 / PCC 7942 / FACHB-805) (Anacystis nidulans R2).